Consider the following 335-residue polypeptide: Legumin type B (335 aa).

Disordered regions lie at residues 47–87 (PETQ…GNSV) and 102–155 (TEED…GRNG). Basic and acidic residues predominate over residues 105 to 118 (DTAKRLRSPRDKRN). A compositionally biased stretch (acidic residues) spans 135 to 144 (QQEEEEEEEE). The 148-residue stretch at 167 to 314 (ENIAQPARAD…AFGLRQRQVT (148 aa)) folds into the Cupin type-1 domain.

It belongs to the 11S seed storage protein (globulins) family. Hexamer; each subunit is composed of an acidic and a basic chain derived from a single precursor and linked by a disulfide bond.

In terms of biological role, this protein found in the seeds of many leguminous and non-leguminous plants is the source of sulfur-containing amino acids in seed meals. The protein is Legumin type B (LEB2) of Vicia faba (Broad bean).